The sequence spans 246 residues: NAD-dependent protein deacylase (246 aa).

A Deacetylase sirtuin-type domain is found at 1 to 245 (MKEFITKHRD…ELIREILDNP (245 aa)). 20–39 (GAGISAESGIPTFRGSEGLW) contributes to the NAD(+) binding site. The substrate site is built by Tyr64 and Arg67. Residue 98–101 (QNVD) coordinates NAD(+). His116 functions as the Proton acceptor in the catalytic mechanism. Residues Cys124, Cys127, Cys146, and Cys149 each coordinate Zn(2+). NAD(+) contacts are provided by residues 186-188 (GTS), 212-214 (NPE), and Thr230.

The protein belongs to the sirtuin family. Class III subfamily. It depends on Zn(2+) as a cofactor.

It is found in the cytoplasm. It carries out the reaction N(6)-acetyl-L-lysyl-[protein] + NAD(+) + H2O = 2''-O-acetyl-ADP-D-ribose + nicotinamide + L-lysyl-[protein]. The enzyme catalyses N(6)-succinyl-L-lysyl-[protein] + NAD(+) + H2O = 2''-O-succinyl-ADP-D-ribose + nicotinamide + L-lysyl-[protein]. Functionally, NAD-dependent lysine deacetylase and desuccinylase that specifically removes acetyl and succinyl groups on target proteins. Modulates the activities of several proteins which are inactive in their acylated form. This is NAD-dependent protein deacylase from Leptospira interrogans serogroup Icterohaemorrhagiae serovar copenhageni (strain Fiocruz L1-130).